A 33-amino-acid polypeptide reads, in one-letter code: Cytochrome b6-f complex subunit 8 (33 aa).

Residues 2-22 form a helical membrane-spanning segment; that stretch reads LFTVAWASLAAMFSFSIAMVV.

It belongs to the PetN family. The 4 large subunits of the cytochrome b6-f complex are cytochrome b6, subunit IV (17 kDa polypeptide, PetD), cytochrome f and the Rieske protein, while the 4 small subunits are PetG, PetL, PetM and PetN. The complex functions as a dimer.

It is found in the cellular thylakoid membrane. In terms of biological role, component of the cytochrome b6-f complex, which mediates electron transfer between photosystem II (PSII) and photosystem I (PSI), cyclic electron flow around PSI, and state transitions. This is Cytochrome b6-f complex subunit 8 from Synechococcus sp. (strain CC9902).